The sequence spans 114 residues: Superoxide dismutase [Cu-Zn] (114 aa).

3 residues coordinate Cu cation: histidine 37, histidine 39, and histidine 54. The disordered stretch occupies residues 48-76 (CMSSGPHFNPRSKEHGAPTDENRHLGDLG). Residues histidine 54, histidine 62, histidine 71, and aspartate 74 each contribute to the Zn(2+) site. Basic and acidic residues predominate over residues 58-73 (RSKEHGAPTDENRHLG). Histidine 111 serves as a coordination point for Cu cation.

It belongs to the Cu-Zn superoxide dismutase family. Homodimer. The cofactor is Cu cation. It depends on Zn(2+) as a cofactor.

It is found in the cytoplasm. The enzyme catalyses 2 superoxide + 2 H(+) = H2O2 + O2. Destroys radicals which are normally produced within the cells and which are toxic to biological systems. This Drosophila obscura (Fruit fly) protein is Superoxide dismutase [Cu-Zn].